Here is a 289-residue protein sequence, read N- to C-terminus: uncharacterized protein (289 aa).

The N-terminal stretch at 1-23 (MIKNYKLLLFTTFTLFFITFVSG) is a signal peptide. Residues N74, N101, N132, and N285 are each glycosylated (N-linked (GlcNAc...) asparagine).

It localises to the secreted. This is an uncharacterized protein from Dictyostelium discoideum (Social amoeba).